An 80-amino-acid polypeptide reads, in one-letter code: Conotoxin VnMSGL-0123 (80 aa).

A signal peptide spans 1 to 20; it reads MSGLGIMVLTLLLLVSMATS. A propeptide spanning residues 21 to 44 is cleaved from the precursor; the sequence is HQDGGGKQATQRDAINVRRRRSIT. 3 cysteine pairs are disulfide-bonded: Cys-53/Cys-65, Cys-57/Cys-74, and Cys-64/Cys-78. Residue Phe-79 is modified to Phenylalanine amide.

The protein belongs to the conotoxin O3 superfamily. In terms of tissue distribution, expressed by the venom duct.

It localises to the secreted. The sequence is that of Conotoxin VnMSGL-0123 from Conus ventricosus (Mediterranean cone).